The following is a 1978-amino-acid chain: Sodium channel protein type 8 subunit alpha (1978 aa).

Disordered regions lie at residues 1–20 and 28–62; these read MAAR…FTPE and RIAE…LEAG. Over 1 to 132 the chain is Cytoplasmic; that stretch reads MAARLLAPPG…RIAIKILIHS (132 aa). The span at 28-61 shows a compositional bias: basic and acidic residues; that stretch reads RIAESKLKKPPKADGSHREDDEDSKPKPNSDLEA. The stretch at 114–442 is one I repeat; that stretch reads ILSPFNLIRR…KAMLEQLKKQ (329 aa). Residues 133-151 form a helical membrane-spanning segment; the sequence is VFSMIIMCTILTNCVFMTF. Residues 152–158 lie on the Extracellular side of the membrane; the sequence is SNPPEWS. A helical transmembrane segment spans residues 159 to 179; sequence KNVEYTFTGIYTFESLVKIIA. The Cytoplasmic segment spans residues 180-193; it reads RGFCIDGFTFLRDP. Residues 194–211 traverse the membrane as a helical segment; sequence WNWLDFSVIMMAYVTEFV. The Extracellular portion of the chain corresponds to 212-217; the sequence is DLGNVS. The N-linked (GlcNAc...) asparagine glycan is linked to N215. The helical transmembrane segment at 218-234 threads the bilayer; that stretch reads ALRTFRVLRALKTISVI. Residues 235-253 are Cytoplasmic-facing; that stretch reads PGLKTIVGALIQSVKKLSD. A helical membrane pass occupies residues 254 to 273; that stretch reads VMILTVFCLSVFALIGLQLF. The Extracellular segment spans residues 274-355; it reads MGNLRNKCVV…PNYGYTSFDT (82 aa). A disulfide bridge connects residues C281 and C333. N-linked (GlcNAc...) asparagine glycosylation is found at N289, N295, N308, and N326. An intramembrane region (pore-forming) is located at residues 356–380; sequence FSWAFLALFRLMTQDYWENLYQLTL. E373 lines the Na(+) pocket. The Extracellular portion of the chain corresponds to 381 to 387; sequence RAAGKTY. A helical membrane pass occupies residues 388–408; sequence MIFFVLVIFVGSFYLVNLILA. The Cytoplasmic segment spans residues 409-751; the sequence is VVAMAYEEQN…EIVNLIVMDP (343 aa). Disordered regions lie at residues 446-530 and 576-597; these read AQAA…KAFR and DPGS…SEGR. Over residues 473–486 the composition is skewed to low complexity; the sequence is SPRSSSELSKLSSK. Residues 489-500 show a composition bias toward basic residues; that stretch reads KERRNRRKKRKQ. Basic and acidic residues-rich tracts occupy residues 501-530 and 586-597; these read KELS…KAFR and DEHSTVEESEGR. 2 positions are modified to phosphoserine: S518 and S520. One copy of the II repeat lies at 733-1005; it reads CHPYWIKLKE…QISVIRIKKG (273 aa). A helical transmembrane segment spans residues 752–770; it reads FVDLAITICIVLNTLFMAM. At 771-781 the chain is on the extracellular side; the sequence is EHHPMTPQFEH. The helical transmembrane segment at 782–801 threads the bilayer; the sequence is VLAVGNLVFTGIFTAEMFLK. Residues 802 to 815 are Cytoplasmic-facing; that stretch reads LIAMDPYYYFQEGW. A helical membrane pass occupies residues 816 to 835; the sequence is NIFDGFIVSLSLMELSLADV. The Extracellular portion of the chain corresponds to 836–837; it reads EG. Residues 838–855 traverse the membrane as a helical segment; it reads LSVLRSFRLLRVFKLAKS. The Cytoplasmic segment spans residues 856–871; that stretch reads WPTLNMLIKIIGNSVG. Residues 872–890 traverse the membrane as a helical segment; that stretch reads ALGNLTLVLAIIVFIFAVV. The Extracellular portion of the chain corresponds to 891-919; that stretch reads GMQLFGKSYKECVCKINQECKLPRWHMND. C904 and C910 form a disulfide bridge. The segment at residues 920–940 is an intramembrane region (pore-forming); sequence FFHSFLIVFRVLCGEWIETMW. Na(+) is bound by residues E934 and E937. The Extracellular segment spans residues 941–953; it reads DCMEVAGQAMCLI. C942 and C951 form a disulfide bridge. Residues 954-974 traverse the membrane as a helical segment; that stretch reads VFMMVMVIGNLVVLNLFLALL. Residues 975 to 1197 lie on the Cytoplasmic side of the membrane; the sequence is LSSFSADNLA…TCFLIVEHNW (223 aa). The disordered stretch occupies residues 1105–1146; it reads NLNTEDVSSESDPEGSKDKLDDTSSSEGSTIDIKPEVEEVPV. An III repeat occupies 1178–1493; it reads LGKSWWILRK…KKYYNAMKKL (316 aa). The helical transmembrane segment at 1198–1215 threads the bilayer; sequence FETFIIFMILLSSGALAF. Residues 1216-1228 lie on the Extracellular side of the membrane; the sequence is EDIYIEQRKTIRT. The helical transmembrane segment at 1229 to 1247 threads the bilayer; sequence ILEYADKVFTYIFILEMLL. Topologically, residues 1248–1261 are cytoplasmic; it reads KWTAYGFVKFFTNA. Residues 1262–1280 form a helical membrane-spanning segment; sequence WCWLDFLIVAVSLVSLIAN. Residues 1281–1288 are Extracellular-facing; it reads ALGYSELG. The helical transmembrane segment at 1289–1307 threads the bilayer; that stretch reads AIKSLRTLRALRPLRALSR. Topologically, residues 1308 to 1324 are cytoplasmic; sequence FEGMRVVVNALVGAIPS. Residues 1325-1344 form a helical membrane-spanning segment; the sequence is IMNVLLVCLIFWLIFSIMGV. Topologically, residues 1345-1397 are extracellular; that stretch reads NLFAGKYHYCFNETSEIRFEIDIVNNKTDCEKLMEGNSTEIRWKNVKINFDNV. C1354 and C1374 are oxidised to a cystine. N1356, N1370, and N1381 each carry an N-linked (GlcNAc...) asparagine glycan. Residues 1398 to 1419 constitute an intramembrane region (pore-forming); that stretch reads GAGYLALLQVATFKGWMDIMYA. Residues 1420–1436 are Extracellular-facing; the sequence is AVDSRKPDEQPDYEGNI. The helical transmembrane segment at 1437–1458 threads the bilayer; sequence YMYIYFVIFIIFGSFFTLNLFI. The Cytoplasmic portion of the chain corresponds to 1459 to 1521; sequence GVIIDNFNQQ…IVFDFVTQQA (63 aa). The residue at position 1495 (S1495) is a Phosphoserine; by PKC. One copy of the IV repeat lies at 1502-1799; sequence IPRPLNKIQG…WEKFDPDATQ (298 aa). A helical transmembrane segment spans residues 1522 to 1539; it reads FDIVIMMLICLNMVTMMV. The Extracellular portion of the chain corresponds to 1540-1550; that stretch reads ETDTQSKQMEN. A helical membrane pass occupies residues 1551 to 1569; it reads ILYWINLVFVIFFTCECVL. Over 1570–1581 the chain is Cytoplasmic; sequence KMFALRHYYFTI. A helical membrane pass occupies residues 1582 to 1599; sequence GWNIFDFVVVILSIVGMF. Over 1600-1612 the chain is Extracellular; that stretch reads LADIIEKYFVSPT. The helical transmembrane segment at 1613-1629 threads the bilayer; the sequence is LFRVIRLARIGRILRLI. Topologically, residues 1630-1648 are cytoplasmic; the sequence is KGAKGIRTLLFALMMSLPA. A helical membrane pass occupies residues 1649 to 1666; that stretch reads LFNIGLLLFLVMFIFSIF. At 1667–1688 the chain is on the extracellular side; sequence GMSNFAYVKHEAGIDDMFNFET. An intramembrane region (pore-forming) is located at residues 1689–1711; the sequence is FGNSMICLFQITTSAGWDGLLLP. At 1712–1740 the chain is on the extracellular side; it reads ILNRPPDCSLDKEHPGSGFKGDCGNPSVG. Cysteines 1719 and 1734 form a disulfide. Residues 1741–1763 traverse the membrane as a helical segment; it reads IFFFVSYIIISFLIVVNMYIAII. At 1764–1978 the chain is on the cytoplasmic side; sequence LENFSVATEE…RQKEVRESKC (215 aa). The IQ domain occupies 1893 to 1922; the sequence is EEVSAVVLQRAYRGHLARRGFICRKMASNK. Residues 1923–1978 form a disordered region; the sequence is LENGGTHRDKKESTPSTASLPSYDSVTKPDKEKQQRAEEGRRERAKRQKEVRESKC. The span at 1936–1947 shows a compositional bias: polar residues; sequence TPSTASLPSYDS. Positions 1949-1978 are enriched in basic and acidic residues; the sequence is TKPDKEKQQRAEEGRRERAKRQKEVRESKC.

This sequence belongs to the sodium channel (TC 1.A.1.10) family. Nav1.6/SCN8A subfamily. In terms of assembly, the voltage-sensitive sodium channel consists of an ion-conducting pore-forming alpha subunit regulated by one or more beta-1 (SCN1B), beta-2 (SCN2B), beta-3 (SCN3B) and/or beta-4 (SCN4B) subunits. Beta-1 (SCN1B) and beta-3 (SCN3B) are non-covalently associated with alpha, while beta-2 (SCN2B) and beta-4 (SCN4B) are covalently linked by disulfide bonds. Interacts with NEDD4 and NEDD4L. Interacts with FGF13. Interacts with FGF14, GBG3, GBB2 and SCN1B. Interacts with TMEM233. Interacts with the conotoxin GVIIJ. Interacts with CALM1; the interaction modulates the inactivation rate of SCN8A. Post-translationally, may be ubiquitinated by NEDD4L; which would promote its endocytosis. Phosphorylation at Ser-1495 by PKC in a highly conserved cytoplasmic loop slows inactivation of the sodium channel and reduces peak sodium currents. Isoform 1 is highly expressed in brain, moderately in spinal cord, and at low levels in dorsal root ganglia, nodose ganglia and superior cervical ganglia. Not detected in sciatic nerve and non-neuronal tissues. Isoform 2 is hardly detectable, if at all, in brain, expressed at low levels in spinal cord and at highest levels in dorsal root ganglia.

It localises to the cell membrane. The protein localises to the cell projection. Its subcellular location is the axon. The enzyme catalyses Na(+)(in) = Na(+)(out). In terms of biological role, pore-forming subunit of a voltage-gated sodium channel complex assuming opened or closed conformations in response to the voltage difference across membranes and through which sodium ions selectively pass along their electrochemical gradient. Contributes to neuronal excitability by regulating action potential threshold and propagation. This Rattus norvegicus (Rat) protein is Sodium channel protein type 8 subunit alpha.